The chain runs to 128 residues: Glycine cleavage system H protein (128 aa).

Positions 22–104 constitute a Lipoyl-binding domain; sequence TVLVGITDYA…YGEGWIFRLK (83 aa). An N6-lipoyllysine modification is found at Lys63.

This sequence belongs to the GcvH family. In terms of assembly, the glycine cleavage system is composed of four proteins: P, T, L and H. Requires (R)-lipoate as cofactor.

Functionally, the glycine cleavage system catalyzes the degradation of glycine. The H protein shuttles the methylamine group of glycine from the P protein to the T protein. In Thermus thermophilus (strain ATCC BAA-163 / DSM 7039 / HB27), this protein is Glycine cleavage system H protein.